The sequence spans 819 residues: Zinc finger protein 27 (819 aa).

Positions 1–75 (MDVTIDFSRE…KTLGAESCHD (75 aa)) constitute a KRAB domain. Residues 93 to 123 (PKRPRHWDPPEDEPKHSSDLQTHDESNGLKR) form a disordered region. Residues 98–120 (HWDPPEDEPKHSSDLQTHDESNG) are compositionally biased toward basic and acidic residues. C2H2-type zinc fingers lie at residues 205–227 (YVCV…QKTH), 233–255 (YKCG…RRIH), 261–283 (YDCS…QKIH), 289–311 (HGCV…QKIH), 317–339 (YVCI…RRIH), 345–367 (YACD…QRIH), 401–423 (SICA…QRTH), 429–451 (YQCG…RRIH), 457–479 (YVCV…QVIH), 485–507 (YQCG…KRIH), 513–535 (YVCS…QKTH), 541–563 (YVCA…QRIH), 569–591 (YGCS…EKIH), 597–619 (YGCR…QKIH), 625–647 (HVCA…QRIH), 653–675 (YGCT…RPIH), 681–703 (YVCA…QKTH), 709–731 (YACS…HRIH), 737–759 (YDCG…QRIH), 765–787 (YRCA…QTTH), and 793–815 (YKCV…ENVH).

Belongs to the krueppel C2H2-type zinc-finger protein family.

It localises to the nucleus. Functionally, may be involved in transcriptional regulation. The sequence is that of Zinc finger protein 27 (Zfp27) from Mus musculus (Mouse).